Consider the following 85-residue polypeptide: MERSNRKVRTGRVVSDKMDKTRVVLVEGRTKHPLYEKTVKQAKKFKAHDEANETREGDVVKIMETRPTSKDKRWRIVDIIERTKL.

It belongs to the universal ribosomal protein uS17 family. As to quaternary structure, part of the 30S ribosomal subunit.

In terms of biological role, one of the primary rRNA binding proteins, it binds specifically to the 5'-end of 16S ribosomal RNA. The polypeptide is Small ribosomal subunit protein uS17 (Natranaerobius thermophilus (strain ATCC BAA-1301 / DSM 18059 / JW/NM-WN-LF)).